The primary structure comprises 317 residues: 4-hydroxy-3-methylbut-2-enyl diphosphate reductase (317 aa).

Cys-12 contributes to the [4Fe-4S] cluster binding site. (2E)-4-hydroxy-3-methylbut-2-enyl diphosphate-binding residues include His-41 and His-74. Dimethylallyl diphosphate is bound by residues His-41 and His-74. Residues His-41 and His-74 each coordinate isopentenyl diphosphate. A [4Fe-4S] cluster-binding site is contributed by Cys-96. His-124 serves as a coordination point for (2E)-4-hydroxy-3-methylbut-2-enyl diphosphate. His-124 provides a ligand contact to dimethylallyl diphosphate. Position 124 (His-124) interacts with isopentenyl diphosphate. Catalysis depends on Glu-126, which acts as the Proton donor. Thr-168 is a (2E)-4-hydroxy-3-methylbut-2-enyl diphosphate binding site. Cys-198 contacts [4Fe-4S] cluster. The (2E)-4-hydroxy-3-methylbut-2-enyl diphosphate site is built by Ser-226, Ser-227, Asn-228, and Ser-270. Dimethylallyl diphosphate contacts are provided by Ser-226, Ser-227, Asn-228, and Ser-270. The isopentenyl diphosphate site is built by Ser-226, Ser-227, Asn-228, and Ser-270.

The protein belongs to the IspH family. The cofactor is [4Fe-4S] cluster.

It carries out the reaction isopentenyl diphosphate + 2 oxidized [2Fe-2S]-[ferredoxin] + H2O = (2E)-4-hydroxy-3-methylbut-2-enyl diphosphate + 2 reduced [2Fe-2S]-[ferredoxin] + 2 H(+). The catalysed reaction is dimethylallyl diphosphate + 2 oxidized [2Fe-2S]-[ferredoxin] + H2O = (2E)-4-hydroxy-3-methylbut-2-enyl diphosphate + 2 reduced [2Fe-2S]-[ferredoxin] + 2 H(+). It functions in the pathway isoprenoid biosynthesis; dimethylallyl diphosphate biosynthesis; dimethylallyl diphosphate from (2E)-4-hydroxy-3-methylbutenyl diphosphate: step 1/1. The protein operates within isoprenoid biosynthesis; isopentenyl diphosphate biosynthesis via DXP pathway; isopentenyl diphosphate from 1-deoxy-D-xylulose 5-phosphate: step 6/6. Its function is as follows. Catalyzes the conversion of 1-hydroxy-2-methyl-2-(E)-butenyl 4-diphosphate (HMBPP) into a mixture of isopentenyl diphosphate (IPP) and dimethylallyl diphosphate (DMAPP). Acts in the terminal step of the DOXP/MEP pathway for isoprenoid precursor biosynthesis. This chain is 4-hydroxy-3-methylbut-2-enyl diphosphate reductase, found in Hahella chejuensis (strain KCTC 2396).